A 312-amino-acid polypeptide reads, in one-letter code: Acetylglutamate kinase (312 aa).

Residues 69 to 70 (GG), arginine 91, and asparagine 191 contribute to the substrate site.

Belongs to the acetylglutamate kinase family. ArgB subfamily.

It localises to the cytoplasm. The enzyme catalyses N-acetyl-L-glutamate + ATP = N-acetyl-L-glutamyl 5-phosphate + ADP. Its pathway is amino-acid biosynthesis; L-arginine biosynthesis; N(2)-acetyl-L-ornithine from L-glutamate: step 2/4. Catalyzes the ATP-dependent phosphorylation of N-acetyl-L-glutamate. In Streptomyces griseus subsp. griseus (strain JCM 4626 / CBS 651.72 / NBRC 13350 / KCC S-0626 / ISP 5235), this protein is Acetylglutamate kinase.